Reading from the N-terminus, the 306-residue chain is tRNA dimethylallyltransferase (306 aa).

11-18 (GPTAVGKS) serves as a coordination point for ATP. A substrate-binding site is contributed by 13-18 (TAVGKS). Residues 35–38 (DSIQ) form an interaction with substrate tRNA region.

Belongs to the IPP transferase family. As to quaternary structure, monomer. The cofactor is Mg(2+).

It catalyses the reaction adenosine(37) in tRNA + dimethylallyl diphosphate = N(6)-dimethylallyladenosine(37) in tRNA + diphosphate. Its function is as follows. Catalyzes the transfer of a dimethylallyl group onto the adenine at position 37 in tRNAs that read codons beginning with uridine, leading to the formation of N6-(dimethylallyl)adenosine (i(6)A). The sequence is that of tRNA dimethylallyltransferase from Borreliella burgdorferi (strain ATCC 35210 / DSM 4680 / CIP 102532 / B31) (Borrelia burgdorferi).